Reading from the N-terminus, the 306-residue chain is Ornithine carbamoyltransferase (306 aa).

Carbamoyl phosphate is bound by residues 46-49 (STRT), Gln-73, Arg-97, and 124-127 (HPTQ). Residues Asn-156, Asp-220, and 224-225 (SM) each bind L-ornithine. Residues 260 to 261 (CL) and Arg-288 each bind carbamoyl phosphate.

Belongs to the aspartate/ornithine carbamoyltransferase superfamily. OTCase family.

It localises to the cytoplasm. It carries out the reaction carbamoyl phosphate + L-ornithine = L-citrulline + phosphate + H(+). It functions in the pathway amino-acid biosynthesis; L-arginine biosynthesis; L-arginine from L-ornithine and carbamoyl phosphate: step 1/3. Reversibly catalyzes the transfer of the carbamoyl group from carbamoyl phosphate (CP) to the N(epsilon) atom of ornithine (ORN) to produce L-citrulline. This Campylobacter jejuni subsp. jejuni serotype O:23/36 (strain 81-176) protein is Ornithine carbamoyltransferase.